Reading from the N-terminus, the 1452-residue chain is Receptor-type tyrosine-protein phosphatase mu (1452 aa).

The N-terminal stretch at 1-20 is a signal peptide; the sequence is MRGLGTCLATLAGLLLTAAG. Over 21-742 the chain is Extracellular; it reads ETFSGGCLFD…PEKQTDHTVK (722 aa). The region spanning 22–184 is the MAM domain; the sequence is TFSGGCLFDE…VKVLGHPCTR (163 aa). Cys27 and Cys36 form a disulfide bridge. N-linked (GlcNAc...) asparagine glycans are attached at residues Asn72, Asn92, Asn131, and Asn249. 2 disulfides stabilise this stretch: Cys96–Cys182 and Cys206–Cys260. An Ig-like C2-type domain is found at 186 to 277; the sequence is PHFLRIQNVE…VGISNYAELV (92 aa). Fibronectin type-III domains follow at residues 284–379, 382–480, 482–587, and 589–671; these read PIAP…CADP, GPRK…TDED, PGAV…SAPS, and PAYE…DSLQ. Residues Asn406, Asn414, Asn454, Asn534, Asn544, Asn598, Asn651, and Asn681 are each glycosylated (N-linked (GlcNAc...) asparagine). Residues 743–764 traverse the membrane as a helical segment; sequence IAGVIAGILLFVIIFLGVVLVM. Residues 765-1452 are Cytoplasmic-facing; sequence KKRKLAKKRK…EVALEYLNSG (688 aa). Position 821 is a phosphoserine (Ser821). Tyrosine-protein phosphatase domains follow at residues 900–1154 and 1186–1448; these read FKEE…ILEA and IKEE…ALEY. Residues Asp1063, 1095–1101, and Gln1139 contribute to the substrate site; that span reads CSAGAGR. Cys1095 serves as the catalytic Phosphocysteine intermediate. Cys1389 functions as the Phosphocysteine intermediate in the catalytic mechanism.

Belongs to the protein-tyrosine phosphatase family. Receptor class 2B subfamily. In terms of assembly, homodimer.

The protein localises to the cell membrane. The enzyme catalyses O-phospho-L-tyrosyl-[protein] + H2O = L-tyrosyl-[protein] + phosphate. In terms of biological role, receptor protein-tyrosine phosphatase that mediates homotypic cell-cell interactions and plays a role in adipogenic differentiation via modulation of p120 catenin/CTNND1 phosphorylation. Promotes CTNND1 dephosphorylation and prevents its cytoplasmic localization where it inhibits SLC2A4 membrane trafficking. In turn, SLC2A4 is directed to the plasma membrane and performs its glucose transporter function. This is Receptor-type tyrosine-protein phosphatase mu (PTPRM) from Homo sapiens (Human).